We begin with the raw amino-acid sequence, 176 residues long: CDP-archaeol synthase (176 aa).

5 helical membrane passes run phenylalanine 12–leucine 32, glycine 60–cysteine 80, isoleucine 85–isoleucine 105, proline 118–isoleucine 138, and phenylalanine 141–isoleucine 161.

The protein belongs to the CDP-archaeol synthase family. The cofactor is Mg(2+).

The protein localises to the cell membrane. It catalyses the reaction 2,3-bis-O-(geranylgeranyl)-sn-glycerol 1-phosphate + CTP + H(+) = CDP-2,3-bis-O-(geranylgeranyl)-sn-glycerol + diphosphate. Its pathway is membrane lipid metabolism; glycerophospholipid metabolism. In terms of biological role, catalyzes the formation of CDP-2,3-bis-(O-geranylgeranyl)-sn-glycerol (CDP-archaeol) from 2,3-bis-(O-geranylgeranyl)-sn-glycerol 1-phosphate (DGGGP) and CTP. This reaction is the third ether-bond-formation step in the biosynthesis of archaeal membrane lipids. The sequence is that of CDP-archaeol synthase from Staphylothermus marinus (strain ATCC 43588 / DSM 3639 / JCM 9404 / F1).